We begin with the raw amino-acid sequence, 431 residues long: Divergent protein kinase domain 1B (431 aa).

Over Met1–Lys30 the chain is Cytoplasmic. Residues Arg5–Arg6 carry the May mediate ER retention motif. Residues Tyr31 to Ser51 form a helical membrane-spanning segment. Residues Ser52–Ser431 are Lumenal-facing. Disulfide bonds link Cys57–Cys94 and Cys62–Cys117.

Belongs to the DIPK family. In terms of processing, among the many cysteines in the lumenal domain, most are probably involved in disulfide bonds.

It is found in the endoplasmic reticulum membrane. In Xenopus tropicalis (Western clawed frog), this protein is Divergent protein kinase domain 1B (dipk1b).